The following is a 150-amino-acid chain: uncharacterized protein (150 aa).

To A.tumefaciens conjugal transfer protein TraB.

This is an uncharacterized protein from Agrobacterium tumefaciens (strain 15955).